Reading from the N-terminus, the 331-residue chain is MKISQAVGNACTVPASNVETHNNNPSRESKIIYLPGTNCEIKSQALLSAFTSYRVGGAAELYVAPRNIEALQASLKYAQEHNLRVTTLGAGSNLLVSDRGISGLVIATRHLRYNRFDHQTGQVTVAAGESIPSLAWEIAKLGWQGFEWAVGIPGTVGGAVVMNAGAHNSCIADILVSAQVLSPDGTIETLTPEELGYGYRTSLLQGSNRVVTQATFQLQPGFDPAYITATTREHKQMRLTTQPYNFPSCGSVFRNPKPYSAGWLIEQSGLKGYQIGGAQVAHLHANFIVNRGGAKANDIFCLIRHIQQEVQERWSILLEPEVKMLGEFQAA.

The region spanning 54 to 221 (RVGGAAELYV…TQATFQLQPG (168 aa)) is the FAD-binding PCMH-type domain. Residue arginine 200 is part of the active site. Serine 251 serves as the catalytic Proton donor. Glutamate 321 is an active-site residue.

This sequence belongs to the MurB family. Requires FAD as cofactor.

Its subcellular location is the cytoplasm. The enzyme catalyses UDP-N-acetyl-alpha-D-muramate + NADP(+) = UDP-N-acetyl-3-O-(1-carboxyvinyl)-alpha-D-glucosamine + NADPH + H(+). It participates in cell wall biogenesis; peptidoglycan biosynthesis. In terms of biological role, cell wall formation. This is UDP-N-acetylenolpyruvoylglucosamine reductase from Trichormus variabilis (strain ATCC 29413 / PCC 7937) (Anabaena variabilis).